The chain runs to 233 residues: Octanoyltransferase (233 aa).

One can recognise a BPL/LPL catalytic domain in the interval 36-211 (DTTPDEIWLV…EFTRQLGYPT (176 aa)). Residues 75 to 82 (RGGQITYH), 142 to 144 (SLG), and 155 to 157 (GLA) each bind substrate. C173 serves as the catalytic Acyl-thioester intermediate.

This sequence belongs to the LipB family.

It is found in the cytoplasm. It carries out the reaction octanoyl-[ACP] + L-lysyl-[protein] = N(6)-octanoyl-L-lysyl-[protein] + holo-[ACP] + H(+). Its pathway is protein modification; protein lipoylation via endogenous pathway; protein N(6)-(lipoyl)lysine from octanoyl-[acyl-carrier-protein]: step 1/2. In terms of biological role, catalyzes the transfer of endogenously produced octanoic acid from octanoyl-acyl-carrier-protein onto the lipoyl domains of lipoate-dependent enzymes. Lipoyl-ACP can also act as a substrate although octanoyl-ACP is likely to be the physiological substrate. The protein is Octanoyltransferase of Yersinia pseudotuberculosis serotype O:1b (strain IP 31758).